The primary structure comprises 470 residues: SHUGOSHIN 2 (470 aa).

A coiled-coil region spans residues 72–113 (IQKLRINLRSVQEKNLQLAQANSQMLAELNTNRDRLKDLQHE). Composition is skewed to basic and acidic residues over residues 131 to 143 (VLPR…KDKV) and 150 to 162 (GDCK…DIKH). Disordered regions lie at residues 131 to 176 (VLPR…IKSS) and 358 to 470 (ESAG…RRKC). Positions 163–172 (KDTKRKRTTR) are enriched in basic residues. The segment covering 370-381 (SESRHETKEITR) has biased composition (basic and acidic residues). Positions 382 to 392 (KRSFSTRRQST) are enriched in basic residues. 3 stretches are compositionally biased toward basic and acidic residues: residues 396 to 406 (SQTDEAIKEIA), 423 to 438 (TESK…EGMT), and 449 to 462 (HAAE…EVSL).

Belongs to the shugoshin family.

Its function is as follows. Dispensable for both meiotic and mitotic cell cycle progression. Required with SGO1 for full protection of centromeric cohesion during anaphase I. Required to prevent precocious release of pericentromeric cohesins during meiosis. Acts redundantly to SGO1. This chain is SHUGOSHIN 2, found in Arabidopsis thaliana (Mouse-ear cress).